The primary structure comprises 278 residues: Undecaprenyl-diphosphatase 1 (278 aa).

5 consecutive transmembrane segments (helical) span residues 85–105 (LNVI…EKTI), 108–128 (ALFS…VILW), 188–208 (VATE…TAYE), 218–238 (VDAL…AFAC), and 254–274 (FAWY…SGAL).

This sequence belongs to the UppP family.

The protein localises to the cell inner membrane. The enzyme catalyses di-trans,octa-cis-undecaprenyl diphosphate + H2O = di-trans,octa-cis-undecaprenyl phosphate + phosphate + H(+). Functionally, catalyzes the dephosphorylation of undecaprenyl diphosphate (UPP). Confers resistance to bacitracin. The chain is Undecaprenyl-diphosphatase 1 from Paraburkholderia xenovorans (strain LB400).